The primary structure comprises 498 residues: Cobyric acid synthase (498 aa).

A GATase cobBQ-type domain is found at 257 to 447; the sequence is DLEIAVLRLP…LHGLLDNGPW (191 aa). Cysteine 338 (nucleophile) is an active-site residue. Histidine 439 is an active-site residue.

It belongs to the CobB/CobQ family. CobQ subfamily.

Its pathway is cofactor biosynthesis; adenosylcobalamin biosynthesis. Functionally, catalyzes amidations at positions B, D, E, and G on adenosylcobyrinic A,C-diamide. NH(2) groups are provided by glutamine, and one molecule of ATP is hydrogenolyzed for each amidation. The sequence is that of Cobyric acid synthase from Synechococcus sp. (strain CC9605).